The chain runs to 151 residues: SsrA-binding protein (151 aa).

Belongs to the SmpB family.

It localises to the cytoplasm. Its function is as follows. Required for rescue of stalled ribosomes mediated by trans-translation. Binds to transfer-messenger RNA (tmRNA), required for stable association of tmRNA with ribosomes. tmRNA and SmpB together mimic tRNA shape, replacing the anticodon stem-loop with SmpB. tmRNA is encoded by the ssrA gene; the 2 termini fold to resemble tRNA(Ala) and it encodes a 'tag peptide', a short internal open reading frame. During trans-translation Ala-aminoacylated tmRNA acts like a tRNA, entering the A-site of stalled ribosomes, displacing the stalled mRNA. The ribosome then switches to translate the ORF on the tmRNA; the nascent peptide is terminated with the 'tag peptide' encoded by the tmRNA and targeted for degradation. The ribosome is freed to recommence translation, which seems to be the essential function of trans-translation. This chain is SsrA-binding protein, found in Wolinella succinogenes (strain ATCC 29543 / DSM 1740 / CCUG 13145 / JCM 31913 / LMG 7466 / NCTC 11488 / FDC 602W) (Vibrio succinogenes).